The sequence spans 170 residues: Copper transporter 1 (170 aa).

Residues 1–29 (MDHDHMHGMPRPSSSSSSSPSSMMNNGSM) are disordered. The span at 9–29 (MPRPSSSSSSSPSSMMNNGSM) shows a compositional bias: low complexity. 2 helical membrane-spanning segments follow: residues 65–85 (GMYALCLIFVFFLAVLTEWLA) and 114–134 (IGLAYLVMLAVMSFNAGVFLV).

It belongs to the copper transporter (Ctr) (TC 1.A.56) family. SLC31A subfamily. Expressed in the root apex, lateral root primordia, embryo, trichomes, guard cells and pollen grains.

The protein localises to the membrane. Its function is as follows. Copper transporter involved in copper acquisition and transport in leaves. Required for copper homeostasis and normal plant growth and development. This chain is Copper transporter 1 (COPT1), found in Arabidopsis thaliana (Mouse-ear cress).